Reading from the N-terminus, the 225-residue chain is 7-cyano-7-deazaguanine synthase (225 aa).

Position 9–19 (Y9–L19) interacts with ATP. 4 residues coordinate Zn(2+): C188, C198, C201, and C204.

The protein belongs to the QueC family. It depends on Zn(2+) as a cofactor.

The catalysed reaction is 7-carboxy-7-deazaguanine + NH4(+) + ATP = 7-cyano-7-deazaguanine + ADP + phosphate + H2O + H(+). Its pathway is purine metabolism; 7-cyano-7-deazaguanine biosynthesis. Its function is as follows. Catalyzes the ATP-dependent conversion of 7-carboxy-7-deazaguanine (CDG) to 7-cyano-7-deazaguanine (preQ(0)). The protein is 7-cyano-7-deazaguanine synthase of Geobacter sp. (strain M21).